Consider the following 142-residue polypeptide: MKPRLLNSFRGYRYRYRYRYGYRRKKPEIRNIDKGIIHILASFNNTIITVTDVKGHVIYWSSAGACGFKGPKKGSAFAAQKATESVIYRVVIKRAAVLITGCGKGRDAALRVIQHNRIPIRAVVDITPNPHNGCRPPAKRRV.

The protein belongs to the universal ribosomal protein uS11 family. As to quaternary structure, part of the 30S ribosomal subunit.

It localises to the plastid. The protein localises to the chloroplast. In Welwitschia mirabilis (Tree tumbo), this protein is Small ribosomal subunit protein uS11c.